The sequence spans 388 residues: N-acetylneuraminate epimerase (388 aa).

The N-terminal stretch at 1–26 is a signal peptide; it reads MFSLIRAKRLAIGIAALAWSTGAVMA. 7 Kelch repeats span residues 48-92, 94-147, 149-186, 187-232, 236-285, 307-356, and 358-387; these read MAYV…AAAG, KIFA…VGLA, GRIAIFGGYNKELFDKYLADVGAIDKDKEPEAYRKLVD, SYMG…ATMG, FLLV…VAGA, ANAA…DAPG, and LLVVGGEDRDGKARKEVFLLKWDGKALSVE. The Proton acceptor role is filled by Glu-242.

It belongs to the NanM family. Homodimer.

The protein resides in the periplasm. It carries out the reaction N-acetyl-alpha-neuraminate = N-acetyl-beta-neuraminate. Its function is as follows. Converts alpha-N-acetylneuranimic acid (Neu5Ac) to the beta-anomer, accelerating the equilibrium between the alpha- and beta-anomers. Probably facilitates sialidase-negative bacteria to compete successfully for limited amounts of extracellular Neu5Ac, which is likely taken up in the beta-anomer. In addition, the rapid removal of sialic acid from solution might be advantageous to the bacterium to damp down host responses. This chain is N-acetylneuraminate epimerase, found in Brucella melitensis biotype 1 (strain ATCC 23456 / CCUG 17765 / NCTC 10094 / 16M).